A 159-amino-acid polypeptide reads, in one-letter code: Protein-export protein SecB (159 aa).

This sequence belongs to the SecB family. As to quaternary structure, homotetramer, a dimer of dimers. One homotetramer interacts with 1 SecA dimer.

The protein resides in the cytoplasm. In terms of biological role, one of the proteins required for the normal export of preproteins out of the cell cytoplasm. It is a molecular chaperone that binds to a subset of precursor proteins, maintaining them in a translocation-competent state. It also specifically binds to its receptor SecA. This Nitrobacter winogradskyi (strain ATCC 25391 / DSM 10237 / CIP 104748 / NCIMB 11846 / Nb-255) protein is Protein-export protein SecB.